A 208-amino-acid polypeptide reads, in one-letter code: Large ribosomal subunit protein uL3 (208 aa).

The segment at 116–146 (GFQGAIKRHGQSRGPMAHGSRYHRRPGSMGP) is disordered.

This sequence belongs to the universal ribosomal protein uL3 family. In terms of assembly, part of the 50S ribosomal subunit. Forms a cluster with proteins L14 and L19.

In terms of biological role, one of the primary rRNA binding proteins, it binds directly near the 3'-end of the 23S rRNA, where it nucleates assembly of the 50S subunit. In Streptococcus mutans serotype c (strain ATCC 700610 / UA159), this protein is Large ribosomal subunit protein uL3.